We begin with the raw amino-acid sequence, 140 residues long: Sex-regulated protein janus-B (140 aa).

Arg42 is a binding site for substrate. Residue His69 is the Proton acceptor of the active site. 110–112 (SRT) is a substrate binding site.

This sequence belongs to the janus family.

Its function is as follows. JanA and janB regulate somatic sex differentiation. The sequence is that of Sex-regulated protein janus-B (janB) from Drosophila sechellia (Fruit fly).